A 161-amino-acid chain; its full sequence is Dehydrin DHN3 (161 aa).

Basic and acidic residues predominate over residues 1-12; the sequence is MEHGHATNRVDE. A disordered region spans residues 1–161; sequence MEHGHATNRV…KIKEKLPGQH (161 aa). Residues 20-38 show a composition bias toward gly residues; the sequence is HGVGTGMGAHGGVGTGAAA. Composition is skewed to low complexity over residues 93–107 and 115–130; these read DQQQTGGTYGQHGHT and HGATATGGTYGQQGHT. A run of 2 repeats spans residues 101–123 and 124–144. The segment at 101–144 is 2 X approximate tandem repeats; it reads YGQHGHTGMTGTGEHGATATGGTYGQQGHTGMTGTGAHGTDGTG. Gly residues predominate over residues 131-142; that stretch reads GMTGTGAHGTDG. Basic and acidic residues predominate over residues 143 to 161; sequence TGEKKGIMDKIKEKLPGQH.

It belongs to the plant dehydrin family.

The protein is Dehydrin DHN3 (DHN3) of Hordeum vulgare (Barley).